A 236-amino-acid polypeptide reads, in one-letter code: MAENQSTVENAKEKLDRWLKDGITTPGGKLPSERELGELLGIKRMTLRQALLNLEAESKIFRKDRKGWFVTQPRFNYSPELSASFQRAAIEQGREPSWGFTEKNRTSDIPETLAPLIAVTPSTELYRITGWGALEGHKVFYHETYINPEVAPGFIEQLENHSFSAVWEKCYQKETVVKKLIFKPVRMPGDISKYLGGSAGMPAILIEKHRADQQGNIVQIDIEYWRFEAVDLIINL.

Residues 5-73 form the HTH gntR-type domain; sequence QSTVENAKEK…DRKGWFVTQP (69 aa). A DNA-binding region (H-T-H motif) is located at residues 33-52; sequence ERELGELLGIKRMTLRQALL.

This is an uncharacterized protein from Escherichia coli O157:H7.